Here is an 84-residue protein sequence, read N- to C-terminus: MKLLYLFLAILLAIEEPVISGKRHILRCMGNSGICRASCKKNEQPYLYCRNCQSCCLQSYMRISISGKEENTDWSYEKQWPRLP.

The N-terminal stretch at 1-21 (MKLLYLFLAILLAIEEPVISG) is a signal peptide. Disulfide bonds link cysteine 28–cysteine 55, cysteine 35–cysteine 49, and cysteine 39–cysteine 56.

The protein belongs to the beta-defensin family. Abundant expression in the male reproductive tract only. Abundant expressed in testis and the caput region of epididymis, but low in the corpus region.

The protein localises to the secreted. Has antibacterial activity. The chain is Beta-defensin 119 (DEFB119) from Homo sapiens (Human).